The chain runs to 320 residues: 1-aminocyclopropane-1-carboxylate oxidase (320 aa).

Residues 154-254 form the Fe2OG dioxygenase domain; that stretch reads PTFGTKVSNY…RMSLASFYNP (101 aa). His178, Asp180, and His235 together coordinate Fe cation.

Belongs to the iron/ascorbate-dependent oxidoreductase family. It depends on Fe cation as a cofactor.

The catalysed reaction is 1-aminocyclopropane-1-carboxylate + L-ascorbate + O2 = ethene + L-dehydroascorbate + hydrogen cyanide + CO2 + 2 H2O. It participates in alkene biosynthesis; ethylene biosynthesis via S-adenosyl-L-methionine; ethylene from S-adenosyl-L-methionine: step 2/2. This Persea americana (Avocado) protein is 1-aminocyclopropane-1-carboxylate oxidase (ACO).